The primary structure comprises 325 residues: GTP 3',8-cyclase (325 aa).

The Radical SAM core domain occupies 10 to 229 (GYGRRINYLR…PSLEKIKSED (220 aa)). Arg19 lines the GTP pocket. Residues Cys26 and Cys30 each coordinate [4Fe-4S] cluster. Residue Tyr32 coordinates S-adenosyl-L-methionine. Residue Cys33 coordinates [4Fe-4S] cluster. Arg69 contacts GTP. Residue Gly73 coordinates S-adenosyl-L-methionine. A GTP-binding site is contributed by Thr100. Ser124 contacts S-adenosyl-L-methionine. Lys161 is a GTP binding site. S-adenosyl-L-methionine is bound at residue Met195. [4Fe-4S] cluster contacts are provided by Cys257 and Cys260. Position 262–264 (262–264 (RLR)) interacts with GTP. Cys274 contributes to the [4Fe-4S] cluster binding site.

The protein belongs to the radical SAM superfamily. MoaA family. Monomer and homodimer. Requires [4Fe-4S] cluster as cofactor.

The enzyme catalyses GTP + AH2 + S-adenosyl-L-methionine = (8S)-3',8-cyclo-7,8-dihydroguanosine 5'-triphosphate + 5'-deoxyadenosine + L-methionine + A + H(+). The protein operates within cofactor biosynthesis; molybdopterin biosynthesis. Its function is as follows. Catalyzes the cyclization of GTP to (8S)-3',8-cyclo-7,8-dihydroguanosine 5'-triphosphate. This Peptoclostridium acidaminophilum (Eubacterium acidaminophilum) protein is GTP 3',8-cyclase.